The sequence spans 930 residues: MKLKDTLNLGKTEFPMRAGLPTKEPVWQKEWEDAKLYQRRQELNQGKPHFTLHDGPPYANGNIHVGHAMNKISKDIIVRSKSMSGFYAPFIPGWDTHGLPIEQVLSKQGVKRKEMDLVEYLKLCREYALSQVDKQREDFKRLGVSGDWENPYVTLTPDYEAAQIRVFGEMANKGYIYRGAKPVYWSWSSESALAEAEIEYHDLVSTSLYYANKVKDGKGVLDTDTYIVVWTTTPFTITASRGLTVGADIDYVLVQPAGEARKFVVAAELLTSLSEKFGWADVQVLETYRGQELNHIVTEHPWDTAVEELVILGDHVTTDSGTGIVHTAPGFGEDDYNVGIANNLEVAVTVDERGIMMKNAGPEFEGQFYEKVVPTVIEKLGNLLLAQEEISHSYPFDWRTKKPIIWRAVPQWFASVSKFRQEILDEIEKVKFHSEWGKVRLYNMIRDRGDWVISRQRAWGVPLPIFYAEDGTAIMVAETIEHVAQLFEEHGSSIWWERDAKDLLPEEFTHPGSPNGEFKKETDIMDVWFDSGSSWNGVVVNRPELTYPADLYLEGSDQYRGWFNSSLITSVANHGVAPYKQILSQGFALDGKGEKMSKSLGNTIAPSDVEKQFGAEILRLWVTSVDSSNDVRISMDILSQVSETYRKIRNTLRFLIANTSDFNPAQDTVAYDELRSVDKYMTIRFNQLVKTIRDAYADFEFLTIYKALVNFINVDLSAFYLDFAKDVVYIEGAKSLERRQMQTVFYDILVKITKLLTPILPHTAEEIWSYLEFEAEDFVQLSELPEAQTSANQEEILDTWAAFMDFRGQAQKALEEARNAKVIGKSLEAHLTVYPNEVVKTLLEAVNSNVAQLLIVSDLTIAEGPAPEAALSFEDVAFTVERAAGEVCDRCRRIDPTTAERSYQAVICDHCASIVEENFAEAVAEGFEEK.

Positions 57–67 (PYANGNIHVGH) match the 'HIGH' region motif. Position 554 (glutamate 554) interacts with L-isoleucyl-5'-AMP. The short motif at 595-599 (KMSKS) is the 'KMSKS' region element. Position 598 (lysine 598) interacts with ATP. Zn(2+) contacts are provided by cysteine 888, cysteine 891, cysteine 908, and cysteine 911.

This sequence belongs to the class-I aminoacyl-tRNA synthetase family. IleS type 1 subfamily. In terms of assembly, monomer. It depends on Zn(2+) as a cofactor.

The protein localises to the cytoplasm. It catalyses the reaction tRNA(Ile) + L-isoleucine + ATP = L-isoleucyl-tRNA(Ile) + AMP + diphosphate. Its function is as follows. Catalyzes the attachment of isoleucine to tRNA(Ile). As IleRS can inadvertently accommodate and process structurally similar amino acids such as valine, to avoid such errors it has two additional distinct tRNA(Ile)-dependent editing activities. One activity is designated as 'pretransfer' editing and involves the hydrolysis of activated Val-AMP. The other activity is designated 'posttransfer' editing and involves deacylation of mischarged Val-tRNA(Ile). This chain is Isoleucine--tRNA ligase, found in Streptococcus pneumoniae (strain Hungary19A-6).